Here is a 139-residue protein sequence, read N- to C-terminus: Phosphoribosyl-AMP cyclohydrolase (139 aa).

Asp-91 serves as a coordination point for Mg(2+). Cys-92 provides a ligand contact to Zn(2+). Positions 93 and 95 each coordinate Mg(2+). Cys-110 and Cys-117 together coordinate Zn(2+).

The protein belongs to the PRA-CH family. Homodimer. Mg(2+) is required as a cofactor. The cofactor is Zn(2+).

The protein resides in the cytoplasm. It carries out the reaction 1-(5-phospho-beta-D-ribosyl)-5'-AMP + H2O = 1-(5-phospho-beta-D-ribosyl)-5-[(5-phospho-beta-D-ribosylamino)methylideneamino]imidazole-4-carboxamide. It functions in the pathway amino-acid biosynthesis; L-histidine biosynthesis; L-histidine from 5-phospho-alpha-D-ribose 1-diphosphate: step 3/9. Its function is as follows. Catalyzes the hydrolysis of the adenine ring of phosphoribosyl-AMP. The protein is Phosphoribosyl-AMP cyclohydrolase of Brucella canis (strain ATCC 23365 / NCTC 10854 / RM-666).